The following is a 344-amino-acid chain: Ribosomal RNA large subunit methyltransferase Cfr (344 aa).

Glu-88 functions as the Proton acceptor in the catalytic mechanism. Residues Lys-95–Arg-324 form the Radical SAM core domain. Cys-102 and Cys-335 form a disulfide bridge. [4Fe-4S] cluster is bound by residues Cys-109, Cys-113, and Cys-116. S-adenosyl-L-methionine is bound by residues Gly-155–Glu-156, Ser-186, Ser-209–His-211, and Asn-290. Cys-335 acts as the S-methylcysteine intermediate in catalysis.

This sequence belongs to the radical SAM superfamily. RlmN family. Cfr subfamily. [4Fe-4S] cluster serves as cofactor.

Its subcellular location is the cytoplasm. The enzyme catalyses adenosine(2503) in 23S rRNA + 2 reduced [2Fe-2S]-[ferredoxin] + 2 S-adenosyl-L-methionine = 8-methyladenosine(2503) in 23S rRNA + 5'-deoxyadenosine + L-methionine + 2 oxidized [2Fe-2S]-[ferredoxin] + S-adenosyl-L-homocysteine. Functionally, specifically methylates position 8 of adenine 2503 in 23S rRNA. Confers resistance to some classes of antibiotics. This is Ribosomal RNA large subunit methyltransferase Cfr from Lachnoclostridium phytofermentans (strain ATCC 700394 / DSM 18823 / ISDg) (Clostridium phytofermentans).